The following is a 466-amino-acid chain: Endoglucanase E-5 (466 aa).

A signal peptide spans methionine 1–alanine 36. The CBM2 domain occupies alanine 37–glycine 139. The segment at cysteine 129 to glutamate 166 is disordered. Residue glutamate 299 is the Proton donor of the active site. Glutamate 391 (nucleophile) is an active-site residue.

This sequence belongs to the glycosyl hydrolase 5 (cellulase A) family.

The enzyme catalyses Endohydrolysis of (1-&gt;4)-beta-D-glucosidic linkages in cellulose, lichenin and cereal beta-D-glucans.. It functions in the pathway glycan metabolism; cellulose degradation. The chain is Endoglucanase E-5 (celE) from Thermobifida fusca (Thermomonospora fusca).